An 89-amino-acid polypeptide reads, in one-letter code: Small ribosomal subunit protein uS15 (89 aa).

The protein belongs to the universal ribosomal protein uS15 family. In terms of assembly, part of the 30S ribosomal subunit. Forms a bridge to the 50S subunit in the 70S ribosome, contacting the 23S rRNA.

In terms of biological role, one of the primary rRNA binding proteins, it binds directly to 16S rRNA where it helps nucleate assembly of the platform of the 30S subunit by binding and bridging several RNA helices of the 16S rRNA. Forms an intersubunit bridge (bridge B4) with the 23S rRNA of the 50S subunit in the ribosome. This chain is Small ribosomal subunit protein uS15, found in Methylorubrum extorquens (strain CM4 / NCIMB 13688) (Methylobacterium extorquens).